A 465-amino-acid polypeptide reads, in one-letter code: Cerebellar degeneration-related protein 2-like (465 aa).

Coiled coils occupy residues 38–143 (LLER…EQLR) and 188–265 (LEQE…TYLL). The tract at residues 282 to 314 (APEADDPQPGRGDDLGAQDGVSSPAASPGHVVR) is disordered. 3 positions are modified to phosphoserine: Ser308, Ser318, and Ser344. Positions 350 to 377 (MSILREVDEQYHALLEKYEELLSKCRQH) form a coiled coil. Residues 382–417 (RHAGVQTSRPISRDSSWRDLRGGEEGQGEVKAGEKS) are disordered. Residues 392-405 (ISRDSSWRDLRGGE) are compositionally biased toward basic and acidic residues.

Belongs to the CDR2 family.

The polypeptide is Cerebellar degeneration-related protein 2-like (CDR2L) (Homo sapiens (Human)).